Consider the following 112-residue polypeptide: MSNIYDSANELSRGLRGLPEYKTVKAAKDAIAADAEASKIFTEYLAFQEEIQKLAQTGQMPDASFQAKMEGFGKQIQGNSLLSEFFTKQQQLAIYLSDIEKIVFEPVSELLK.

Belongs to the UPF0342 family.

In Streptococcus pneumoniae (strain Taiwan19F-14), this protein is UPF0342 protein SPT_0901.